Consider the following 165-residue polypeptide: Cyclic pyranopterin monophosphate synthase (165 aa).

Residues 76-78 (LCH) and 114-115 (ME) contribute to the substrate site. D129 is a catalytic residue.

It belongs to the MoaC family. In terms of assembly, homohexamer; trimer of dimers.

The enzyme catalyses (8S)-3',8-cyclo-7,8-dihydroguanosine 5'-triphosphate = cyclic pyranopterin phosphate + diphosphate. It functions in the pathway cofactor biosynthesis; molybdopterin biosynthesis. Its function is as follows. Catalyzes the conversion of (8S)-3',8-cyclo-7,8-dihydroguanosine 5'-triphosphate to cyclic pyranopterin monophosphate (cPMP). In Brucella canis (strain ATCC 23365 / NCTC 10854 / RM-666), this protein is Cyclic pyranopterin monophosphate synthase.